Consider the following 329-residue polypeptide: Tryptophan--tRNA ligase (329 aa).

ATP contacts are provided by residues Q9 to S11 and G17 to N18. The 'HIGH' region signature appears at P10–N18. D132 contacts L-tryptophan. ATP is bound by residues G144–D146, V183, and K192–S196. The 'KMSKS' region motif lies at K192 to S196.

Belongs to the class-I aminoacyl-tRNA synthetase family. In terms of assembly, homodimer.

The protein localises to the cytoplasm. It catalyses the reaction tRNA(Trp) + L-tryptophan + ATP = L-tryptophyl-tRNA(Trp) + AMP + diphosphate + H(+). Functionally, catalyzes the attachment of tryptophan to tRNA(Trp). The sequence is that of Tryptophan--tRNA ligase from Bacillus anthracis.